A 164-amino-acid chain; its full sequence is MLNREDNQYQEKLLKISRVSKTTKGGRTISFSVLAAVGDGEGKIGLGLGKANGVPDAIRKAIAAAKKNIVKISLKNNTIPHEIAGKWGATTLWMAPAYEGTGVIAGSASREILELVGVHDILTKIKGSRNKHNVARATVEALKLLRTAEQIAALRGLEVKDILS.

Positions 9–72 (YQEKLLKISR…AAAKKNIVKI (64 aa)) constitute an S5 DRBM domain.

It belongs to the universal ribosomal protein uS5 family. Part of the 30S ribosomal subunit. Contacts proteins S4 and S8.

Its function is as follows. With S4 and S12 plays an important role in translational accuracy. In terms of biological role, located at the back of the 30S subunit body where it stabilizes the conformation of the head with respect to the body. This chain is Small ribosomal subunit protein uS5, found in Fusobacterium nucleatum subsp. nucleatum (strain ATCC 25586 / DSM 15643 / BCRC 10681 / CIP 101130 / JCM 8532 / KCTC 2640 / LMG 13131 / VPI 4355).